Here is a 383-residue protein sequence, read N- to C-terminus: Lipid-A-disaccharide synthase (383 aa).

The protein belongs to the LpxB family.

The catalysed reaction is a lipid X + a UDP-2-N,3-O-bis[(3R)-3-hydroxyacyl]-alpha-D-glucosamine = a lipid A disaccharide + UDP + H(+). It functions in the pathway bacterial outer membrane biogenesis; LPS lipid A biosynthesis. Functionally, condensation of UDP-2,3-diacylglucosamine and 2,3-diacylglucosamine-1-phosphate to form lipid A disaccharide, a precursor of lipid A, a phosphorylated glycolipid that anchors the lipopolysaccharide to the outer membrane of the cell. The chain is Lipid-A-disaccharide synthase from Anaeromyxobacter dehalogenans (strain 2CP-C).